A 279-amino-acid chain; its full sequence is Release factor glutamine methyltransferase (279 aa).

S-adenosyl-L-methionine is bound by residues 118–122, Asp-141, and Asn-182; that span reads GTGSG. 182-185 lines the substrate pocket; that stretch reads NPPY.

This sequence belongs to the protein N5-glutamine methyltransferase family. PrmC subfamily.

The enzyme catalyses L-glutaminyl-[peptide chain release factor] + S-adenosyl-L-methionine = N(5)-methyl-L-glutaminyl-[peptide chain release factor] + S-adenosyl-L-homocysteine + H(+). Its function is as follows. Methylates the class 1 translation termination release factors RF1/PrfA and RF2/PrfB on the glutamine residue of the universally conserved GGQ motif. The polypeptide is Release factor glutamine methyltransferase (Streptococcus pneumoniae (strain ATCC BAA-255 / R6)).